The primary structure comprises 467 residues: MDYLPIFCQLQHKACLLVGGGEIAERKARLLLDAGAALTVNACSFTPQFHEWAALGRLTLAAGEFSAELLAEKWLVIAATDRVEVNALVYQCANQQRVFCNVVDDPKRASFIMPSIIDRSPIMVAVSSGGKAPVLARLLREKLEAVLPQHLGKLAQLGGSLRQRVKKHFSDIGSRRRFWEKLFAHDRLAQSLANNDVALAERQIEQLFSHQPQECGEVVLVGAGPGDAGLLTLKGLQQIQQADVVVYDRLVSDEIMTLVRRDAERIFVGKRAGHHCVPQEQINQILLQQAQLGKRVVRLKGGDPFIFGRGGEELETLADANIPFSVVPGITAASGCSAYSGIPLTHRDHAQSVRLVTGHAKSDGGLDWSTLAAGQQTLVFYMGLTQAADIQRQLIAHGMPAATPVALVENGTSCRQRVIEGELSQLGTLALQAASPSLIIVGSVVSLRSKLNWFSSQEPSQPLAQMA.

A precorrin-2 dehydrogenase /sirohydrochlorin ferrochelatase region spans residues 1–204; sequence MDYLPIFCQL…NDVALAERQI (204 aa). NAD(+) is bound by residues 22 to 23 and 43 to 44; these read EI and CS. Phosphoserine is present on Ser128. Residues 216 to 467 form a uroporphyrinogen-III C-methyltransferase region; sequence GEVVLVGAGP…EPSQPLAQMA (252 aa). Pro225 serves as a coordination point for S-adenosyl-L-methionine. Asp248 (proton acceptor) is an active-site residue. Lys270 (proton donor) is an active-site residue. S-adenosyl-L-methionine-binding positions include 301–303, Ile306, 331–332, Met382, and Gly411; these read GGD and TA.

It in the N-terminal section; belongs to the precorrin-2 dehydrogenase / sirohydrochlorin ferrochelatase family. The protein in the C-terminal section; belongs to the precorrin methyltransferase family.

It carries out the reaction uroporphyrinogen III + 2 S-adenosyl-L-methionine = precorrin-2 + 2 S-adenosyl-L-homocysteine + H(+). The catalysed reaction is precorrin-2 + NAD(+) = sirohydrochlorin + NADH + 2 H(+). It catalyses the reaction siroheme + 2 H(+) = sirohydrochlorin + Fe(2+). The protein operates within cofactor biosynthesis; adenosylcobalamin biosynthesis; precorrin-2 from uroporphyrinogen III: step 1/1. Its pathway is cofactor biosynthesis; adenosylcobalamin biosynthesis; sirohydrochlorin from precorrin-2: step 1/1. It participates in porphyrin-containing compound metabolism; siroheme biosynthesis; precorrin-2 from uroporphyrinogen III: step 1/1. It functions in the pathway porphyrin-containing compound metabolism; siroheme biosynthesis; siroheme from sirohydrochlorin: step 1/1. The protein operates within porphyrin-containing compound metabolism; siroheme biosynthesis; sirohydrochlorin from precorrin-2: step 1/1. Functionally, multifunctional enzyme that catalyzes the SAM-dependent methylations of uroporphyrinogen III at position C-2 and C-7 to form precorrin-2 via precorrin-1. Then it catalyzes the NAD-dependent ring dehydrogenation of precorrin-2 to yield sirohydrochlorin. Finally, it catalyzes the ferrochelation of sirohydrochlorin to yield siroheme. This Serratia proteamaculans (strain 568) protein is Siroheme synthase 2.